Here is a 601-residue protein sequence, read N- to C-terminus: Elongation factor 4 (601 aa).

Residues 2–184 (DLIRNFSIIA…EMIARVPPPT (183 aa)) enclose the tr-type G domain. GTP contacts are provided by residues 14-19 (DHGKST) and 131-134 (NKID).

Belongs to the TRAFAC class translation factor GTPase superfamily. Classic translation factor GTPase family. LepA subfamily.

Its subcellular location is the cell inner membrane. The catalysed reaction is GTP + H2O = GDP + phosphate + H(+). In terms of biological role, required for accurate and efficient protein synthesis under certain stress conditions. May act as a fidelity factor of the translation reaction, by catalyzing a one-codon backward translocation of tRNAs on improperly translocated ribosomes. Back-translocation proceeds from a post-translocation (POST) complex to a pre-translocation (PRE) complex, thus giving elongation factor G a second chance to translocate the tRNAs correctly. Binds to ribosomes in a GTP-dependent manner. In Polynucleobacter necessarius subsp. necessarius (strain STIR1), this protein is Elongation factor 4.